Here is a 133-residue protein sequence, read N- to C-terminus: Ribonuclease P protein component (133 aa).

It belongs to the RnpA family. In terms of assembly, consists of a catalytic RNA component (M1 or rnpB) and a protein subunit.

The enzyme catalyses Endonucleolytic cleavage of RNA, removing 5'-extranucleotides from tRNA precursor.. In terms of biological role, RNaseP catalyzes the removal of the 5'-leader sequence from pre-tRNA to produce the mature 5'-terminus. It can also cleave other RNA substrates such as 4.5S RNA. The protein component plays an auxiliary but essential role in vivo by binding to the 5'-leader sequence and broadening the substrate specificity of the ribozyme. The polypeptide is Ribonuclease P protein component (Corynebacterium glutamicum (strain ATCC 13032 / DSM 20300 / JCM 1318 / BCRC 11384 / CCUG 27702 / LMG 3730 / NBRC 12168 / NCIMB 10025 / NRRL B-2784 / 534)).